The chain runs to 434 residues: CBL-interacting protein kinase 15 (434 aa).

Residues 12–267 enclose the Protein kinase domain; that stretch reads YELGRLLGKG…IQKIKESTWF (256 aa). Residues 18-26 and Lys-41 each bind ATP; that span reads LGKGTFGKV. Residue Asp-135 is the Proton acceptor of the active site. An activation loop region spans residues 153–182; it reads DFGLSALSESKRQDGLLHTTCGTPAYVAPE. The NAF domain maps to 298–333; it reads RKKNAHEDVKPMSVTNLNAFEIISFSKGFDLSGMFI. The segment at 338–367 is PPI; sequence RNEARFTSDKSASTIISKLEDVAKALNLRV.

Belongs to the protein kinase superfamily. CAMK Ser/Thr protein kinase family. SNF1 subfamily. It depends on Mn(2+) as a cofactor.

It catalyses the reaction L-seryl-[protein] + ATP = O-phospho-L-seryl-[protein] + ADP + H(+). The catalysed reaction is L-threonyl-[protein] + ATP = O-phospho-L-threonyl-[protein] + ADP + H(+). In terms of biological role, involved in salt stress tolerance. CIPK serine-threonine protein kinases interact with CBL proteins. Binding of a CBL protein to the regulatory NAF domain of CIPK protein lead to the activation of the kinase in a calcium-dependent manner. The protein is CBL-interacting protein kinase 15 (CIPK15) of Oryza sativa subsp. japonica (Rice).